The chain runs to 209 residues: Glutathione S-transferase (209 aa).

Positions 7 to 91 constitute a GST N-terminal domain; that stretch reads FFFFFFFFFS…YLSKKYNISG (85 aa). Glutathione-binding positions include 62–63, 75–76, Asp109, Lys121, and Thr125; these read QV and QS. Residues 93–209 enclose the GST C-terminal domain; the sequence is GELNEFYADM…YIANRKESVY (117 aa).

The protein belongs to the GST superfamily. Homodimer. In the absence of ligands two homodimers may interact to form a tetramer.

The enzyme catalyses RX + glutathione = an S-substituted glutathione + a halide anion + H(+). Its function is as follows. Conjugation of reduced glutathione to a wide number of exogenous and endogenous hydrophobic electrophiles. May also function as a storage protein or ligandin for parasitotoxic ferriprotoporphyrin IX (hemin). The chain is Glutathione S-transferase from Plasmodium yoelii yoelii.